We begin with the raw amino-acid sequence, 514 residues long: Cytochrome P450 monooxygenase verB (514 aa).

Residues 5 to 25 traverse the membrane as a helical segment; the sequence is WLSASVLITAVILLVDYLNYY. Cys457 is a binding site for heme.

It belongs to the cytochrome P450 family. Heme is required as a cofactor.

The protein resides in the membrane. The protein operates within mycotoxin biosynthesis. Its function is as follows. Cytochrome P450 monooxygenase; part of the gene cluster that mediates the biosynthesis of 11'-deoxyverticillin A, one of the dimeric epipolythiodioxopiperazines (ETPs) from the verticillin family that act as mycotoxins. 11'-deoxyverticillin A is required for normal conidiation. The nonribosomal peptide synthetase verP is speculated to be responsible for condensation of amino acids to form the carbon skeleton of verticillin, whereas the cluster-specific tailoring enzymes are involved in further modifications leading to the production of 11'-deoxyverticillin A. The polypeptide is Cytochrome P450 monooxygenase verB (Clonostachys rogersoniana).